We begin with the raw amino-acid sequence, 384 residues long: Guanine nucleotide-binding protein alpha-1 subunit (384 aa).

The interval 1–22 (MGSLCSRNKHYSQADDEENTQT) is disordered. Residue Gly2 is the site of N-myristoyl glycine attachment. The S-palmitoyl cysteine moiety is linked to residue Cys5. The G-alpha domain maps to 38 to 384 (HIQKLLLLGA…RRNLFEAGLL (347 aa)). The interval 41–54 (KLLLLGAGDSGKST) is G1 motif. GTP-binding residues include Asp49, Ser50, Gly51, Lys52, Ser53, Thr54, Asp163, Leu188, Thr194, Gly222, Asn288, Lys289, Asp291, and Ala356. Ser53 is a Mg(2+) binding site. Residues 186 to 194 (DVLFARIRT) are G2 motif. Thr194 is a binding site for Mg(2+). The interval 215–224 (YRLFDVGGQR) is G3 motif. Residues 284–291 (MLFLNKFD) form a G4 motif region. The G5 motif stretch occupies residues 354 to 359 (TTALDQ).

It belongs to the G-alpha family. G proteins are composed of 3 units; alpha, beta and gamma. The alpha chain contains the guanine nucleotide binding site. The cofactor is Mg(2+).

In terms of biological role, guanine nucleotide-binding proteins (G proteins) are involved as modulators or transducers in various transmembrane signaling systems. This chain is Guanine nucleotide-binding protein alpha-1 subunit (GPA1), found in Solanum lycopersicum (Tomato).